Consider the following 243-residue polypeptide: CAVP-target protein (243 aa).

Positions 1 to 22 are disordered; that stretch reads PKPPAEAKPAAKPAAPPAAANP. Residues 7–20 show a composition bias toward low complexity; that stretch reads AKPAAKPAAPPAAA. The region spanning 35–62 is the IQ domain; that stretch reads SAATRIQASFRMHKNRMALKEKSIPKFS. 2 consecutive Ig-like C2-type domains span residues 59 to 150 and 151 to 243; these read PKFS…LALE and VPAK…VKVN.

Its function is as follows. This protein is the target of CAVP, which binds to it in a calcium-dependent manner. The sequence is that of CAVP-target protein from Branchiostoma lanceolatum (Common lancelet).